The sequence spans 485 residues: 28S rRNA (uridine-N(3))-methyltransferase (485 aa).

S-adenosyl-L-methionine is bound by residues R296, G318, and N347.

This sequence belongs to the class IV-like SAM-binding methyltransferase superfamily.

The protein localises to the nucleus. The enzyme catalyses uridine in 28S rRNA + S-adenosyl-L-methionine = N(3)-methyluridine in 28S rRNA + S-adenosyl-L-homocysteine + H(+). Functionally, S-adenosyl-L-methionine-dependent methyltransferase that specifically methylates the uridine in position 3485 of 28S rRNA. The chain is 28S rRNA (uridine-N(3))-methyltransferase from Drosophila melanogaster (Fruit fly).